We begin with the raw amino-acid sequence, 91 residues long: MARVTVQDAVEKIGNRFDLVLVAARRARQMQTGGKEPLVPEENDKTTVLALREIEEGLINNQILDVRERQEQQEQEAAELQAVTAIAEGRR.

This sequence belongs to the RNA polymerase subunit omega family. In terms of assembly, the RNAP catalytic core consists of 2 alpha, 1 beta, 1 beta' and 1 omega subunit. When a sigma factor is associated with the core the holoenzyme is formed, which can initiate transcription.

The catalysed reaction is RNA(n) + a ribonucleoside 5'-triphosphate = RNA(n+1) + diphosphate. Its function is as follows. Promotes RNA polymerase assembly. Latches the N- and C-terminal regions of the beta' subunit thereby facilitating its interaction with the beta and alpha subunits. The sequence is that of DNA-directed RNA polymerase subunit omega from Edwardsiella ictaluri (strain 93-146).